The chain runs to 75 residues: Brevinin-2ISc (75 aa).

Positions 1–22 (MFTLKKSLLLLFFLGTISLSLC) are cleaved as a signal peptide. Residues 23 to 40 (EEERDADEDEGEMTEEEV) constitute a propeptide, removed in mature form. A disulfide bridge connects residues Cys69 and Cys75.

In terms of tissue distribution, expressed by the skin glands.

It localises to the secreted. Has antimicrobial activity against Gram-negative bacterium E.coli ATCC 8739 (MIC=50 ug) and against Gram positive bacteria S.aureus ATCC 6538 (MIC=25 ug). Has no activity against methicillin-resistant S.aureus ATCC 43300, B.subtilis ATCC 6633 and against fungus C.albicans ATCC 90028. The polypeptide is Brevinin-2ISc (Odorrana ishikawae (Ishikawa's frog)).